A 597-amino-acid chain; its full sequence is Elongation factor 4 (597 aa).

One can recognise a tr-type G domain in the interval 2–184; the sequence is KNIRNFSIIA…EIVAKIPAPT (183 aa). GTP is bound by residues 14–19 and 131–134; these read DHGKST and NKID.

It belongs to the TRAFAC class translation factor GTPase superfamily. Classic translation factor GTPase family. LepA subfamily.

The protein resides in the cell inner membrane. It carries out the reaction GTP + H2O = GDP + phosphate + H(+). In terms of biological role, required for accurate and efficient protein synthesis under certain stress conditions. May act as a fidelity factor of the translation reaction, by catalyzing a one-codon backward translocation of tRNAs on improperly translocated ribosomes. Back-translocation proceeds from a post-translocation (POST) complex to a pre-translocation (PRE) complex, thus giving elongation factor G a second chance to translocate the tRNAs correctly. Binds to ribosomes in a GTP-dependent manner. The polypeptide is Elongation factor 4 (Neisseria meningitidis serogroup B (strain ATCC BAA-335 / MC58)).